Consider the following 188-residue polypeptide: uncharacterized protein (188 aa).

The N-terminal stretch at 1 to 23 is a signal peptide; the sequence is MFKGQKTLAALAVSLLFTAPVYA. Residues Cys42 and Cys81 are joined by a disulfide bond.

The protein belongs to the fimbrial protein family.

It is found in the fimbrium. This is an uncharacterized protein from Escherichia coli (strain K12).